The chain runs to 1192 residues: Homeodomain-interacting protein kinase 3 (1192 aa).

Residue lysine 27 forms a Glycyl lysine isopeptide (Lys-Gly) (interchain with G-Cter in SUMO); alternate linkage. Residue lysine 27 forms a Glycyl lysine isopeptide (Lys-Gly) (interchain with G-Cter in SUMO2); alternate linkage. A Protein kinase domain is found at 197-525 (YEVLDFLGRG…PIETLNHPFV (329 aa)). ATP is bound by residues 203-211 (LGRGTFGQV) and lysine 226. Aspartate 322 serves as the catalytic Proton acceptor. Residue tyrosine 359 is modified to Phosphotyrosine. Residues 767–921 (QNRSNSLQNT…NSMSDDEQES (155 aa)) are interaction with AR. Residues 775–868 (NTNIPHSAFI…SPRPSLRECK (94 aa)) form an interaction with FAS region. Residues 799–829 (CVDTQDNHTSEGEAGTCREASVRQDSSVSDK) form a disordered region. Residues 832-988 (QTIIIADSPS…ESGLSVDEHM (157 aa)) form a required for localization to nuclear speckles region. The segment at 843 to 895 (AVSVITISSDSDDEETSPRPSLRECKGSLDCEACQSTLNIDRMCSLSSPDSTL) is SUMO interaction motifs (SIM); required for nuclear localization and kinase activity. Residues 847 to 857 (ITISSDSDDEE) are interaction with UBL1. Residues 889–906 (SSPDSTLSTSSSGQSSPS) are compositionally biased toward low complexity. Disordered stretches follow at residues 889 to 943 (SSPD…PFAE) and 956 to 1023 (LGTC…KPAA). Lysine 1185 is covalently cross-linked (Glycyl lysine isopeptide (Lys-Gly) (interchain with G-Cter in SUMO)).

It belongs to the protein kinase superfamily. CMGC Ser/Thr protein kinase family. HIPK subfamily. Interacts with UBL1/SUMO-1. Interacts with and stabilizes ligand-bound androgen receptor (AR). Interacts with Nkx1-2. Interacts with FAS and DAXX. Probably part of a complex consisting of HIPK3, FAS and FADD. Binds to NR5A1/SF1, SPEN/MINT and RUNX2. Autophosphorylated, but autophosphorylation is not required for catalytic activity. In terms of processing, may be sumoylated. Heart, skeletal muscle, spleen, testis and lung.

The protein localises to the cytoplasm. It is found in the nucleus. It carries out the reaction L-seryl-[protein] + ATP = O-phospho-L-seryl-[protein] + ADP + H(+). It catalyses the reaction L-threonyl-[protein] + ATP = O-phospho-L-threonyl-[protein] + ADP + H(+). Its function is as follows. Serine/threonine-protein kinase involved in transcription regulation, apoptosis and steroidogenic gene expression. Phosphorylates JUN and RUNX2. Seems to negatively regulate apoptosis by promoting FADD phosphorylation. Enhances androgen receptor-mediated transcription. May act as a transcriptional corepressor for NK homeodomain transcription factors. The phosphorylation of NR5A1 activates SF1 leading to increased steroidogenic gene expression upon cAMP signaling pathway stimulation. In osteoblasts, supports transcription activation: phosphorylates RUNX2 that synergizes with SPEN/MINT to enhance FGFR2-mediated activation of the osteocalcin FGF-responsive element (OCFRE). The chain is Homeodomain-interacting protein kinase 3 (Hipk3) from Mus musculus (Mouse).